Here is a 171-residue protein sequence, read N- to C-terminus: Large ribosomal subunit protein uL10 (171 aa).

This sequence belongs to the universal ribosomal protein uL10 family. In terms of assembly, part of the ribosomal stalk of the 50S ribosomal subunit. The N-terminus interacts with L11 and the large rRNA to form the base of the stalk. The C-terminus forms an elongated spine to which L12 dimers bind in a sequential fashion forming a multimeric L10(L12)X complex.

Functionally, forms part of the ribosomal stalk, playing a central role in the interaction of the ribosome with GTP-bound translation factors. This Rhizorhabdus wittichii (strain DSM 6014 / CCUG 31198 / JCM 15750 / NBRC 105917 / EY 4224 / RW1) (Sphingomonas wittichii) protein is Large ribosomal subunit protein uL10.